The chain runs to 534 residues: CTP synthase (534 aa).

Positions 1-267 (MTKYIFVTGG…DQIVCDHLKL (267 aa)) are amidoligase domain. S13 provides a ligand contact to CTP. S13 contributes to the UTP binding site. Position 14 to 19 (14 to 19 (SIGKGI)) interacts with ATP. Y54 provides a ligand contact to L-glutamine. D71 provides a ligand contact to ATP. Mg(2+) contacts are provided by D71 and E141. CTP contacts are provided by residues 148–150 (DIE), 188–193 (KTKPTQ), and K224. Residues 188-193 (KTKPTQ) and K224 each bind UTP. 240–242 (RDV) is an ATP binding site. One can recognise a Glutamine amidotransferase type-1 domain in the interval 292–534 (KIALVGKYVE…FVTAAIKNSN (243 aa)). G354 serves as a coordination point for L-glutamine. C381 acts as the Nucleophile; for glutamine hydrolysis in catalysis. Residues 382 to 385 (LGMQ), E405, and R463 contribute to the L-glutamine site. Catalysis depends on residues H508 and E510.

This sequence belongs to the CTP synthase family. Homotetramer.

The catalysed reaction is UTP + L-glutamine + ATP + H2O = CTP + L-glutamate + ADP + phosphate + 2 H(+). It carries out the reaction L-glutamine + H2O = L-glutamate + NH4(+). The enzyme catalyses UTP + NH4(+) + ATP = CTP + ADP + phosphate + 2 H(+). It participates in pyrimidine metabolism; CTP biosynthesis via de novo pathway; CTP from UDP: step 2/2. Its activity is regulated as follows. Allosterically activated by GTP, when glutamine is the substrate; GTP has no effect on the reaction when ammonia is the substrate. The allosteric effector GTP functions by stabilizing the protein conformation that binds the tetrahedral intermediate(s) formed during glutamine hydrolysis. Inhibited by the product CTP, via allosteric rather than competitive inhibition. In terms of biological role, catalyzes the ATP-dependent amination of UTP to CTP with either L-glutamine or ammonia as the source of nitrogen. Regulates intracellular CTP levels through interactions with the four ribonucleotide triphosphates. This chain is CTP synthase, found in Streptococcus pyogenes serotype M18 (strain MGAS8232).